The following is a 424-amino-acid chain: Histidine--tRNA ligase (424 aa).

This sequence belongs to the class-II aminoacyl-tRNA synthetase family. As to quaternary structure, homodimer.

It is found in the cytoplasm. It catalyses the reaction tRNA(His) + L-histidine + ATP = L-histidyl-tRNA(His) + AMP + diphosphate + H(+). This Shewanella amazonensis (strain ATCC BAA-1098 / SB2B) protein is Histidine--tRNA ligase.